The chain runs to 466 residues: Muscarinic acetylcholine receptor M2 (466 aa).

Residues 1 to 22 (MNNSTNSSNNSLALTSPYKTFE) are Extracellular-facing. N-linked (GlcNAc...) asparagine glycosylation is found at N2, N3, N6, and N9. Residues 23–45 (VVFIVLVAGSLSLVTIIGNILVM) form a helical membrane-spanning segment. Topologically, residues 46–59 (VSIKVNRHLQTVNN) are cytoplasmic. Residues 60 to 80 (YFLFSLACADLIIGVFSMNLY) traverse the membrane as a helical segment. The Extracellular segment spans residues 81–97 (TLYTVIGYWPLGPVVCD). C96 and C176 form a disulfide bridge. The helical transmembrane segment at 98–119 (LWLALDYVVSNASVMNLLIISF) threads the bilayer. The Important for signaling signature appears at 120–122 (DRY). Residues 120–139 (DRYFCVTKPLTYPVKRTTKM) lie on the Cytoplasmic side of the membrane. A helical membrane pass occupies residues 140-162 (AGMMIAAAWVLSFILWAPAILFW). The Extracellular portion of the chain corresponds to 163 to 184 (QFIVGVRTVEDGECYIQFFSNA). Residues 185–209 (AVTFGTAIAAFYLPVIIMTVLYWHI) form a helical membrane-spanning segment. Residues 210-387 (SRASKSRIKK…PPSREKKVTR (178 aa)) lie on the Cytoplasmic side of the membrane. The segment at 218–355 (KKDKKEPVAN…VVGSSGQNGD (138 aa)) is disordered. A Phosphoserine modification is found at S232. Basic and acidic residues predominate over residues 254-270 (GLEHNKIQNGKAPRDPV). Composition is skewed to polar residues over residues 284–293 (NDSTSVSAVA), 304–313 (DENTVSTSLG), and 334–353 (SDSC…SGQN). A helical membrane pass occupies residues 388 to 410 (TILAILLAFIITWAPYNVMVLIN). At 411 to 418 (TFCAPCIP) the chain is on the extracellular side. Cysteines 413 and 416 form a disulfide. Residues 419 to 442 (NTVWTIGYWLCYINSTINPACYAL) form a helical membrane-spanning segment. An Important for signaling motif is present at residues 436–440 (NPACY). At 443–466 (CNATFKKTFKHLLMCHYKNIGATR) the chain is on the cytoplasmic side. Phosphothreonine is present on residues T446, T450, and T465.

The protein belongs to the G-protein coupled receptor 1 family. Muscarinic acetylcholine receptor subfamily. CHRM2 sub-subfamily. In terms of assembly, interacts with ARRB1 and ARRB2. Interacts with RACK1; the interaction regulates CHRM2 internalization. In terms of processing, phosphorylated in response to agonist treatment.

Its subcellular location is the cell membrane. The protein localises to the postsynaptic cell membrane. The muscarinic acetylcholine receptor mediates various cellular responses, including inhibition of adenylate cyclase, breakdown of phosphoinositides and modulation of potassium channels through the action of G proteins. Primary transducing effect is adenylate cyclase inhibition. Signaling promotes phospholipase C activity, leading to the release of inositol trisphosphate (IP3); this then triggers calcium ion release into the cytosol. This chain is Muscarinic acetylcholine receptor M2 (CHRM2), found in Homo sapiens (Human).